A 450-amino-acid chain; its full sequence is Glucose-6-phosphate isomerase (450 aa).

Glutamate 291 (proton donor) is an active-site residue. Active-site residues include histidine 312 and lysine 426.

The protein belongs to the GPI family.

It localises to the cytoplasm. The enzyme catalyses alpha-D-glucose 6-phosphate = beta-D-fructose 6-phosphate. It functions in the pathway carbohydrate biosynthesis; gluconeogenesis. The protein operates within carbohydrate degradation; glycolysis; D-glyceraldehyde 3-phosphate and glycerone phosphate from D-glucose: step 2/4. Functionally, catalyzes the reversible isomerization of glucose-6-phosphate to fructose-6-phosphate. This Clostridium novyi (strain NT) protein is Glucose-6-phosphate isomerase.